We begin with the raw amino-acid sequence, 529 residues long: Ectonucleoside triphosphate diphosphohydrolase 3 (529 aa).

Topologically, residues 1 to 22 (MFTVMTRQPCEQAGFRALSRTP) are cytoplasmic. A helical transmembrane segment spans residues 23–43 (AIVTLVVLLVSIVVLVTLTLI). Topologically, residues 44-485 (QIRHPQVLPP…PLIHLPIQPP (442 aa)) are extracellular. Residue Asn81 is glycosylated (N-linked (GlcNAc...) asparagine). Cys92 and Cys116 are oxidised to a cystine. The N-linked (GlcNAc...) asparagine glycan is linked to Asn149. Glu182 (proton acceptor) is an active-site residue. 222–226 (GASTQ) serves as a coordination point for ATP. N-linked (GlcNAc...) asparagine glycans are attached at residues Asn238, Asn284, and Asn318. 3 disulfide bridges follow: Cys261–Cys308, Cys289–Cys334, and Cys347–Cys353. N-linked (GlcNAc...) asparagine glycosylation is found at Asn381 and Asn392. A disulfide bond links Cys399 and Cys422. N-linked (GlcNAc...) asparagine glycosylation is present at Asn454. Residues 486–506 (VFMGVLAFFTAIALLCLAFLL) form a helical membrane-spanning segment. Residues 507–529 (YLCSSFRTKERSENAFDQAVDSD) lie on the Cytoplasmic side of the membrane.

It belongs to the GDA1/CD39 NTPase family. Ca(2+) is required as a cofactor. It depends on Mg(2+) as a cofactor.

It localises to the cell membrane. It catalyses the reaction a ribonucleoside 5'-triphosphate + 2 H2O = a ribonucleoside 5'-phosphate + 2 phosphate + 2 H(+). In terms of biological role, catalyzes the hydrolysis of nucleoside triphosphates and diphosphates. Has a threefold preference for the hydrolysis of ATP and UTP over ADP and UDP. In Mus musculus (Mouse), this protein is Ectonucleoside triphosphate diphosphohydrolase 3.